Here is a 1683-residue protein sequence, read N- to C-terminus: ABC transporter 7 (1683 aa).

A helical transmembrane segment spans residues Asp-24–Phe-44. Positions Arg-53–Asp-93 are disordered. Acidic residues predominate over residues Ser-81–Asp-93. 4 helical membrane-spanning segments follow: residues Leu-127–Leu-147, Thr-157–Leu-177, His-190–Phe-210, and Leu-221–Ile-241. The N-linked (GlcNAc...) asparagine glycan is linked to Asn-247. 2 helical membrane passes run Gly-336–Leu-356 and Ser-368–Asp-388. An ABC transmembrane type-1 1 domain is found at Ala-338–Glu-664. The disordered stretch occupies residues Gly-451–Gln-473. An N-linked (GlcNAc...) asparagine glycan is attached at Asn-489. 2 helical membrane passes run Tyr-496–Tyr-516 and Val-518–Ile-538. N-linked (GlcNAc...) asparagine glycosylation occurs at Asn-545. Helical transmembrane passes span Val-602–Phe-622 and Pro-632–Leu-648. Positions Ile-700–Lys-949 constitute an ABC transporter 1 domain. Gly-742–Thr-749 is an ATP binding site. The disordered stretch occupies residues Ser-952–Glu-998. Asn-956 carries an N-linked (GlcNAc...) asparagine glycan. A helical transmembrane segment spans residues Leu-1016–Ser-1036. Residues Val-1028–Ser-1351 enclose the ABC transmembrane type-1 2 domain. Asn-1097 carries an N-linked (GlcNAc...) asparagine glycan. 3 helical membrane passes run Ala-1111–Leu-1131, Val-1182–Val-1202, and Val-1204–Ala-1224. Residue Asn-1277 is glycosylated (N-linked (GlcNAc...) asparagine). 2 consecutive transmembrane segments (helical) span residues Leu-1304–Ile-1324 and Gly-1327–Val-1347. The ABC transporter 2 domain maps to Val-1392 to Cys-1649. Asn-1396 and Asn-1411 each carry an N-linked (GlcNAc...) asparagine glycan. Gly-1426 to Ser-1433 serves as a coordination point for ATP. Asn-1541 and Asn-1552 each carry an N-linked (GlcNAc...) asparagine glycan.

This sequence belongs to the ABC transporter superfamily.

The protein resides in the membrane. ABC transporter; part of the gene cluster that mediates the biosynthesis of pyriculol and pyriculariol, two heptaketides that induce lesion formation upon application on rice leaves but are dispensable for pathogenicity. With the MFS transporter MFS1, is most likely responsible for pyriculol and pyriculariol secretion and thereby may contribute to intrinsic resistance. The polypeptide is ABC transporter 7 (Pyricularia oryzae (strain 70-15 / ATCC MYA-4617 / FGSC 8958) (Rice blast fungus)).